A 248-amino-acid polypeptide reads, in one-letter code: Granulin (248 aa).

It belongs to the polyhedrin family.

Component of the virus occlusion bodies, which are large proteinaceous structures, that protect the virus from the outside environment for extended periods until they are ingested by insect larvae. In Xestia c-nigrum granulosis virus (XnGV), this protein is Granulin.